The chain runs to 217 residues: Pyridoxine/pyridoxamine 5'-phosphate oxidase (217 aa).

FMN contacts are provided by residues 66 to 71 (RMVLLK), 81 to 82 (FT), Arg-87, Lys-88, and Gln-110. Residue Lys-71 participates in substrate binding. Tyr-128, Arg-132, and Ser-136 together coordinate substrate. FMN is bound by residues 145 to 146 (QS) and Trp-190. 196–198 (RLH) is a binding site for substrate. Arg-200 serves as a coordination point for FMN.

It belongs to the pyridoxamine 5'-phosphate oxidase family. As to quaternary structure, homodimer. It depends on FMN as a cofactor.

It catalyses the reaction pyridoxamine 5'-phosphate + O2 + H2O = pyridoxal 5'-phosphate + H2O2 + NH4(+). It carries out the reaction pyridoxine 5'-phosphate + O2 = pyridoxal 5'-phosphate + H2O2. Its pathway is cofactor metabolism; pyridoxal 5'-phosphate salvage; pyridoxal 5'-phosphate from pyridoxamine 5'-phosphate: step 1/1. It participates in cofactor metabolism; pyridoxal 5'-phosphate salvage; pyridoxal 5'-phosphate from pyridoxine 5'-phosphate: step 1/1. In terms of biological role, catalyzes the oxidation of either pyridoxine 5'-phosphate (PNP) or pyridoxamine 5'-phosphate (PMP) into pyridoxal 5'-phosphate (PLP). The sequence is that of Pyridoxine/pyridoxamine 5'-phosphate oxidase from Psychromonas ingrahamii (strain DSM 17664 / CCUG 51855 / 37).